Here is a 231-residue protein sequence, read N- to C-terminus: MKIGIIGAMEQEVAILKDKIEGLSTVTKAGCTFYTGTLNGADVVLLQSGIGKVAAAVGTTLLIAEHNVDVVLNTGSAGGFDSSLNLGDVVISTEVRHHDADVTAFGYEMGQMAQQPAAFIADEKLITTAEQALTEMSDKHAVRGLICTGDVFVCTPERQEFIRTHFPSVIAVEMEASAIAQTCHQFNTPFVVVRAISDVADKESPMSFDEFLPLAAQSSSEMVLNMVTLLK.

Residue Glu12 is the Proton acceptor of the active site. Substrate-binding positions include Gly78, Val153, and 174 to 175; that span reads ME. The Proton donor role is filled by Asp198.

This sequence belongs to the PNP/UDP phosphorylase family. MtnN subfamily.

It catalyses the reaction S-adenosyl-L-homocysteine + H2O = S-(5-deoxy-D-ribos-5-yl)-L-homocysteine + adenine. The enzyme catalyses S-methyl-5'-thioadenosine + H2O = 5-(methylsulfanyl)-D-ribose + adenine. It carries out the reaction 5'-deoxyadenosine + H2O = 5-deoxy-D-ribose + adenine. It functions in the pathway amino-acid biosynthesis; L-methionine biosynthesis via salvage pathway; S-methyl-5-thio-alpha-D-ribose 1-phosphate from S-methyl-5'-thioadenosine (hydrolase route): step 1/2. Functionally, catalyzes the irreversible cleavage of the glycosidic bond in both 5'-methylthioadenosine (MTA) and S-adenosylhomocysteine (SAH/AdoHcy) to adenine and the corresponding thioribose, 5'-methylthioribose and S-ribosylhomocysteine, respectively. Also cleaves 5'-deoxyadenosine, a toxic by-product of radical S-adenosylmethionine (SAM) enzymes, into 5-deoxyribose and adenine. This Aliivibrio fischeri (strain MJ11) (Vibrio fischeri) protein is 5'-methylthioadenosine/S-adenosylhomocysteine nucleosidase.